The following is a 122-amino-acid chain: Small ribosomal subunit protein uS13 (122 aa).

A disordered region spans residues 99–122; the sequence is RGQRTHTNARTRKGPAKAIAGKKK.

Belongs to the universal ribosomal protein uS13 family. As to quaternary structure, part of the 30S ribosomal subunit. Forms a loose heterodimer with protein S19. Forms two bridges to the 50S subunit in the 70S ribosome.

Located at the top of the head of the 30S subunit, it contacts several helices of the 16S rRNA. In the 70S ribosome it contacts the 23S rRNA (bridge B1a) and protein L5 of the 50S subunit (bridge B1b), connecting the 2 subunits; these bridges are implicated in subunit movement. Contacts the tRNAs in the A and P-sites. This Rhodopseudomonas palustris (strain TIE-1) protein is Small ribosomal subunit protein uS13.